The following is a 227-amino-acid chain: Probable septum site-determining protein MinC (227 aa).

Belongs to the MinC family. Interacts with MinD and FtsZ.

Its function is as follows. Cell division inhibitor that blocks the formation of polar Z ring septums. Rapidly oscillates between the poles of the cell to destabilize FtsZ filaments that have formed before they mature into polar Z rings. Prevents FtsZ polymerization. The polypeptide is Probable septum site-determining protein MinC (Photorhabdus laumondii subsp. laumondii (strain DSM 15139 / CIP 105565 / TT01) (Photorhabdus luminescens subsp. laumondii)).